The primary structure comprises 617 residues: Hemagglutinin glycoprotein (617 aa).

The Intravirion segment spans residues 1–37 (MSPQRDRINAFYKDNPHPKGSRIVINREHLMIDRPYV). The tract at residues 1 to 154 (MSPQRDRINA…RIKLDYDQYC (154 aa)) is stalk. A helical; Signal-anchor for type II membrane protein transmembrane segment spans residues 38–58 (LLAVLFVMFLSLIGLLAIAGI). Topologically, residues 59 to 617 (RLHRAAIYTA…VTREDGTNRR (559 aa)) are virion surface. N-linked (GlcNAc...) asparagine; by host glycosylation is found at asparagine 168, asparagine 187, asparagine 200, asparagine 215, and asparagine 238. 5 cysteine pairs are disulfide-bonded: cysteine 188–cysteine 606, cysteine 287–cysteine 300, cysteine 381–cysteine 494, cysteine 386–cysteine 394, and cysteine 570–cysteine 579. The interval 458 to 543 (PMKNLALGVI…VEHAVVYYVY (86 aa)) is interaction with host NECTIN4 receptor.

The protein belongs to the paramyxoviruses hemagglutinin-neuraminidase family. Non-sialidase subfamily. Homodimer; disulfide-linked. Further forms homotetramer (dimer of dimers). Interacts (via C-terminus) with human NECTIN4 (via N-terminus); this interaction allows attachment to the respiratory epithelium and viral entry. Interacts (via C-terminus) with human SLAMF1/CD150 (via N-terminus); this interaction allows attachment and viral entry into the CD150-expressing immune cells. Interacts with human CD46 antigen.

The protein localises to the virion membrane. The protein resides in the host cell membrane. Its function is as follows. Attaches the virus to the human SLAMF1/CD150 receptor for entry into host dendritic cells, macrophages, activated memory T cells and naive or memory B cells, thereby explaining the long immunosuppression that follows infection. In the respiratory airways, binds to the NECTIN4 receptor for entry into the host cell. Binding of H protein to the receptor induces a conformational change that allows the F protein to trigger virion/cell membranes fusion. The vaccine and laboratory-adapted strains use host CD46 as an alternate receptor. The high degree of interaction between H and CD46 results in down-regulation of the latter from the surface of infected cells, rendering them more sensitive to c3b-mediated complement lysis. This is Hemagglutinin glycoprotein (H) from Homo sapiens (Human).